A 734-amino-acid chain; its full sequence is Photosystem I P700 chlorophyll a apoprotein A2 (734 aa).

A run of 8 helical transmembrane segments spans residues 46–69 (IFASHFGQLAIIFLWTSGNLFHVA), 135–158 (LYTGALFLLFLSAISLIGGWLHLQ), 175–199 (LNHHLSGLFGVSSLAWTGHLVHVAI), 273–291 (IAHHHLAIAILFLIAGHMY), 330–353 (IHFQLGLALASLGVITSLVAQHMY), 369–395 (AALYTHHQYIAGFIMTGAFAHGAIFFI), 417–439 (AIISHLSWASLFLGFHTLGLYVH), and 517–535 (FLVHHAIALGLHTTTLILV). 2 residues coordinate [4Fe-4S] cluster: Cys-559 and Cys-568. 2 helical membrane passes run 575–596 (AFYLAVFWMLNTIGWVTFYWHW) and 643–665 (LSVWAWMFLFGHLVWATGFMFLI). Residues His-654, Met-662, and Tyr-670 each contribute to the chlorophyll a site. A phylloquinone-binding site is contributed by Trp-671. The chain crosses the membrane as a helical span at residues 707 to 727 (LVGLAHFSVGYIFTYAAFLIA).

The protein belongs to the PsaA/PsaB family. As to quaternary structure, the PsaA/B heterodimer binds the P700 chlorophyll special pair and subsequent electron acceptors. PSI consists of a core antenna complex that captures photons, and an electron transfer chain that converts photonic excitation into a charge separation. The eukaryotic PSI reaction center is composed of at least 11 subunits. P700 is a chlorophyll a/chlorophyll a' dimer, A0 is one or more chlorophyll a, A1 is one or both phylloquinones and FX is a shared 4Fe-4S iron-sulfur center. serves as cofactor.

It localises to the plastid. The protein localises to the chloroplast thylakoid membrane. It carries out the reaction reduced [plastocyanin] + hnu + oxidized [2Fe-2S]-[ferredoxin] = oxidized [plastocyanin] + reduced [2Fe-2S]-[ferredoxin]. Functionally, psaA and PsaB bind P700, the primary electron donor of photosystem I (PSI), as well as the electron acceptors A0, A1 and FX. PSI is a plastocyanin-ferredoxin oxidoreductase, converting photonic excitation into a charge separation, which transfers an electron from the donor P700 chlorophyll pair to the spectroscopically characterized acceptors A0, A1, FX, FA and FB in turn. Oxidized P700 is reduced on the lumenal side of the thylakoid membrane by plastocyanin. The polypeptide is Photosystem I P700 chlorophyll a apoprotein A2 (Aethionema cordifolium (Lebanon stonecress)).